Here is a 1758-residue protein sequence, read N- to C-terminus: Condensin-2 complex subunit hcp-6 (1758 aa).

Disordered stretches follow at residues 428 to 501 (DPGA…KAKE), 969 to 1008 (ENGS…KGGM), 1379 to 1460 (QKRL…ARLL), and 1500 to 1656 (SKQA…LSRG). A compositionally biased stretch (acidic residues) spans 438–462 (EQNEEEDEEEEGEDEEEEEENEQDD). Positions 463-473 (VAVKEEEQSDK) are enriched in basic and acidic residues. Acidic residues predominate over residues 474 to 484 (SDEENDGDNEE). Residues 485 to 501 (NVSKKKEEKKKEKKAKE) are compositionally biased toward basic and acidic residues. A compositionally biased stretch (polar residues) spans 969–979 (ENGSSDASTVN). The segment covering 999–1008 (SSQKSSKGGM) has biased composition (low complexity). Positions 1326-1385 (CIEHKNDIDEILQDNRQLKDEMMFELQRVKQRTEEANRILDEYLKRVAEFKKQQKRLSKS) form a coiled coil. The span at 1414-1423 (EDQENVEEEV) shows a compositional bias: acidic residues. Composition is skewed to basic and acidic residues over residues 1424–1437 (EMRT…DADV) and 1500–1512 (SKQA…KTIV). Composition is skewed to polar residues over residues 1602–1618 (ISAN…QSTE) and 1640–1651 (VPTSSSGNTEND).

In terms of assembly, component of the condensin-2 complex.

The protein resides in the nucleus. The protein localises to the chromosome. It localises to the centromere. Functionally, chromosomal protein which is recruited to mitotic chromosomes by hcp-3 (CENP-A) and hcp-4 (CENP-C). Involved in chromosome segregation during mitosis, playing a role in chromosome condensation and in maintaining chromosome morphology, rigidity and orientation during mitosis. The chain is Condensin-2 complex subunit hcp-6 from Caenorhabditis elegans.